The primary structure comprises 149 residues: Transcription antitermination protein NusB (149 aa).

The protein belongs to the NusB family.

Its function is as follows. Involved in transcription antitermination. Required for transcription of ribosomal RNA (rRNA) genes. Binds specifically to the boxA antiterminator sequence of the ribosomal RNA (rrn) operons. This Sphingopyxis alaskensis (strain DSM 13593 / LMG 18877 / RB2256) (Sphingomonas alaskensis) protein is Transcription antitermination protein NusB.